Consider the following 89-residue polypeptide: Large ribosomal subunit protein bL28 (89 aa).

Belongs to the bacterial ribosomal protein bL28 family.

The sequence is that of Large ribosomal subunit protein bL28 from Chlamydia felis (strain Fe/C-56) (Chlamydophila felis).